Here is a 156-residue protein sequence, read N- to C-terminus: Cyanate hydratase (156 aa).

Residues Arg-96, Glu-99, and Ser-122 contribute to the active site.

This sequence belongs to the cyanase family.

The catalysed reaction is cyanate + hydrogencarbonate + 3 H(+) = NH4(+) + 2 CO2. Its function is as follows. Catalyzes the reaction of cyanate with bicarbonate to produce ammonia and carbon dioxide. This is Cyanate hydratase from Escherichia coli (strain K12 / DH10B).